Here is a 176-residue protein sequence, read N- to C-terminus: MLRFLNQCSQGRGAWLLMAFTALALELTALWFQHVMLLKPCVLCIYERCALFGVLGAALIGAIAPKTPLRYVAMVIWLYSAFRGVQLTYEHTMLQLYPSPFATCDFMVRFPEWLPLDKWVPQVFVASGDCAERQWDFLGLEMPQWLLGIFIAYLIVAVLVVISQPFKAKKRDLFGR.

At 1–14 (MLRFLNQCSQGRGA) the chain is on the cytoplasmic side. Residues 15 to 31 (WLLMAFTALALELTALW) form a helical membrane-spanning segment. Residues 32-49 (FQHVMLLKPCVLCIYERC) lie on the Periplasmic side of the membrane. Cysteine 41 and cysteine 44 are oxidised to a cystine. The helical transmembrane segment at 50-65 (ALFGVLGAALIGAIAP) threads the bilayer. Residues 66 to 71 (KTPLRY) are Cytoplasmic-facing. Residues 72–89 (VAMVIWLYSAFRGVQLTY) form a helical membrane-spanning segment. The Periplasmic portion of the chain corresponds to 90-144 (EHTMLQLYPSPFATCDFMVRFPEWLPLDKWVPQVFVASGDCAERQWDFLGLEMPQ). A disulfide bridge connects residues cysteine 104 and cysteine 130. Residues 145-163 (WLLGIFIAYLIVAVLVVIS) traverse the membrane as a helical segment. The Cytoplasmic segment spans residues 164–176 (QPFKAKKRDLFGR).

The protein belongs to the DsbB family.

Its subcellular location is the cell inner membrane. Required for disulfide bond formation in some periplasmic proteins such as PhoA or OmpA. Acts by oxidizing the DsbA protein. This Escherichia coli O157:H7 protein is Disulfide bond formation protein B (dsbB).